The chain runs to 3313 residues: PHD finger protein rhinoceros (3313 aa).

The span at 1-16 shows a compositional bias: basic residues; it reads MSQRGKRGNQHHHQSH. The interval 1-136 is disordered; the sequence is MSQRGKRGNQ…QGASTSSSWQ (136 aa). 2 stretches are compositionally biased toward low complexity: residues 42 to 71 and 100 to 134; these read PPNGATTAAAAIAAAAAAAAAAAAGTATGG and LGAASSSSSITKSKSTKLAKSSSKSKSQGASTSSS. The PHD-type 1 zinc-finger motif lies at 323–373; the sequence is NVICDVCRSPDSEEANEMVFCDNCNICVHQACYGITAIPSGQWLCRTCSMG. The segment at 375-409 adopts a C2HC pre-PHD-type zinc-finger fold; sequence TPDCVLCPNKAGAMKSNKSGKHWAHVSCALWIPEV. The PHD-type 2; degenerate zinc-finger motif lies at 433 to 487; it reads LVCVLCRKRVGSCIQCSKHSMSKGKKENAGGASGGGSASVTSSMHKANKYATGTG. 17 disordered regions span residues 453–526, 708–1076, 1107–1842, 1961–2033, 2104–2136, 2145–2164, 2219–2252, 2353–2374, 2398–2514, 2563–2587, 2647–2679, 2827–2871, 2888–2954, 2978–2998, 3017–3077, 3144–3233, and 3259–3313; these read MSKG…ARAQ, LQSG…TKAA, KEAK…PPSH, AQKE…TMGN, PVTAQSGAGSNSNKLSDYDENTRMQSPFGRMQR, ARRSSSPSSVSESNDQPPAT, AAPQQQTTPTHQQQQQQQQQQQQQRTPNSQFNGG, PAYPAHPAHPAHPAHPAHPAHP, VAAK…PPPM, TTRGQPKPTPAPTAATTTNPLLHPV, ATGTGTSPSKHPAVSAAPVAPAPAPAANSQPPA, SCGL…SSSR, LAGA…IKIR, YEMTRRACPPKKRLTSNYSTP, DFDK…SATT, KAEK…SLPE, and YENS…CEVR. Residues 512–526 show a composition bias toward basic and acidic residues; it reads KNDMTSEERNQARAQ. Over residues 735–749 the composition is skewed to polar residues; it reads KKLNNGAITSRTSSP. Over residues 760-772 the composition is skewed to low complexity; that stretch reads STSTSTATATTAA. Over residues 792–802 the composition is skewed to polar residues; it reads GAATGTSTHNK. Composition is skewed to low complexity over residues 803-861 and 894-912; these read TQSQ…ASGI and EAAAGASAASPNSRSATSS. A compositionally biased stretch (basic and acidic residues) spans 919-934; sequence QQRRRQEPERERDGRG. A compositionally biased stretch (polar residues) spans 942 to 955; it reads TVPNRTQPTKSKQS. The segment covering 956-972 has biased composition (low complexity); that stretch reads TQADAGSGAGTGAAVET. Over residues 994 to 1003 the composition is skewed to acidic residues; sequence ESLSSDESEE. Low complexity predominate over residues 1015–1025; sequence AALSSGLAASG. The segment covering 1058-1072 has biased composition (polar residues); the sequence is VESNVSDSQNQQTIR. Composition is skewed to basic and acidic residues over residues 1159-1168 and 1178-1205; these read AADRMREPES and KLKDSGSKQATEADKFGGGDKVRSKEQS. Positions 1250 to 1266 are enriched in low complexity; that stretch reads EAKSTAPAAKPTAAKTS. Positions 1285–1301 are enriched in polar residues; sequence LKSSKPLQDTTFSTANE. 3 stretches are compositionally biased toward low complexity: residues 1308–1324, 1377–1404, and 1451–1464; these read AATTATTTGMTTLGVAT, SSSSSGDSDSSSSSSSSGSSSSSGSGSD, and PAASAAAAAAAAAT. The span at 1475–1485 shows a compositional bias: polar residues; sequence TARTRQNSTNK. The span at 1551 to 1579 shows a compositional bias: basic and acidic residues; the sequence is SPEKQTARRKSRADESPKKIPNLEHEINQ. Residues 1638–1650 show a composition bias toward acidic residues; that stretch reads PVVEPEVETEIEP. Positions 1667 to 1678 are enriched in polar residues; sequence TAPTHTQLSANA. The span at 1691–1702 shows a compositional bias: pro residues; it reads PAAPLPASPTPT. Basic residues predominate over residues 1722–1734; that stretch reads SRWRSRRRRRRRS. Residues 1744–1773 adopt a coiled-coil conformation; the sequence is HTQHLLNEMEMARELEEERKNELLANASKY. A compositionally biased stretch (basic and acidic residues) spans 1753 to 1765; the sequence is EMARELEEERKNE. Composition is skewed to polar residues over residues 1771–1781 and 1796–1805; these read SKYSASTSSPA and DSNSANSGGD. Residues 1806–1819 show a composition bias toward low complexity; sequence QQQQQQQQPLPQQL. Polar residues predominate over residues 1823–1832; sequence SPSSEVASTI. Positions 1965–1984 are enriched in low complexity; sequence QQQQQQQQQQQQQQQQQQQQ. Polar residues-rich tracts occupy residues 1985-1999 and 2007-2018; these read SCLYGNSSGPNSVAS and MTANSGSYANSL. Over residues 2019 to 2033 the composition is skewed to low complexity; that stretch reads TNTPNATPTNATMGN. Over residues 2106–2118 the composition is skewed to polar residues; the sequence is TAQSGAGSNSNKL. Low complexity-rich tracts occupy residues 2148 to 2157 and 2222 to 2242; these read SSSPSSVSES and QQQTTPTHQQQQQQQQQQQQQ. Pro residues predominate over residues 2439–2451; the sequence is PVQPQPPTPPAPA. Residues 2479–2488 show a composition bias toward gly residues; the sequence is GSGGSGAPGR. The segment covering 2658–2679 has biased composition (low complexity); that stretch reads PAVSAAPVAPAPAPAANSQPPA. Positions 2891 to 2900 are enriched in gly residues; that stretch reads ASGGGAGTAS. Residues 2909–2924 are compositionally biased toward polar residues; sequence CSSGSNNDNNGKTGAA. Residues 2935–2946 show a composition bias toward basic and acidic residues; that stretch reads KTLESSEDDHQT. Residues 3017 to 3026 are compositionally biased toward basic and acidic residues; it reads DFDKGEENNK. The span at 3046–3065 shows a compositional bias: basic residues; sequence KRPKSSKPKKDKKEKKRQKQ. A compositionally biased stretch (polar residues) spans 3179-3198; the sequence is TSPQGLLLNSFTPHSQNANA. Over residues 3268-3290 the composition is skewed to low complexity; the sequence is SASGTGSASSNSCNSNSNNNNNN. A compositionally biased stretch (gly residues) spans 3291–3302; that stretch reads GSGGGAASGGGS.

This sequence belongs to the JADE family.

It is found in the nucleus. In terms of biological role, may function as a negative regulator of the EGFR/Ras/MAPK signaling pathway during eye development. The protein is PHD finger protein rhinoceros (rno) of Drosophila pseudoobscura pseudoobscura (Fruit fly).